Consider the following 134-residue polypeptide: Phosphoribosyl-AMP cyclohydrolase (134 aa).

Asp77 contributes to the Mg(2+) binding site. Position 78 (Cys78) interacts with Zn(2+). Mg(2+)-binding residues include Asp79 and Asp81. Zn(2+) contacts are provided by Cys95 and Cys102.

The protein belongs to the PRA-CH family. As to quaternary structure, homodimer. Mg(2+) is required as a cofactor. The cofactor is Zn(2+).

The protein resides in the cytoplasm. The catalysed reaction is 1-(5-phospho-beta-D-ribosyl)-5'-AMP + H2O = 1-(5-phospho-beta-D-ribosyl)-5-[(5-phospho-beta-D-ribosylamino)methylideneamino]imidazole-4-carboxamide. The protein operates within amino-acid biosynthesis; L-histidine biosynthesis; L-histidine from 5-phospho-alpha-D-ribose 1-diphosphate: step 3/9. In terms of biological role, catalyzes the hydrolysis of the adenine ring of phosphoribosyl-AMP. This is Phosphoribosyl-AMP cyclohydrolase from Pseudomonas paraeruginosa (strain DSM 24068 / PA7) (Pseudomonas aeruginosa (strain PA7)).